Consider the following 172-residue polypeptide: MSLKDKIRVIEDFPKKGISFKDITTLIADGEGLRDSVDQMAEFFKDKNIDVVVGPEARGFIFGVPVAYALGVGFIPVRKPGKLPGDTVRVEYDLEYGKDALEIHKDAIKPGMRVAIVDDLLATGGTIAAVAKLVEQAGGEVAGLAFTIELTELKGRDKLKGYEVTSLVDYDV.

The protein belongs to the purine/pyrimidine phosphoribosyltransferase family. As to quaternary structure, homodimer.

It localises to the cytoplasm. The enzyme catalyses AMP + diphosphate = 5-phospho-alpha-D-ribose 1-diphosphate + adenine. Its pathway is purine metabolism; AMP biosynthesis via salvage pathway; AMP from adenine: step 1/1. Its function is as follows. Catalyzes a salvage reaction resulting in the formation of AMP, that is energically less costly than de novo synthesis. The sequence is that of Adenine phosphoribosyltransferase from Clostridium perfringens (strain ATCC 13124 / DSM 756 / JCM 1290 / NCIMB 6125 / NCTC 8237 / Type A).